The sequence spans 201 residues: L-rhamnose-binding lectin SML (201 aa).

Cystine bridges form between cysteine 10-cysteine 40, cysteine 20-cysteine 99, cysteine 54-cysteine 86, cysteine 67-cysteine 73, cysteine 108-cysteine 138, cysteine 117-cysteine 195, cysteine 152-cysteine 182, and cysteine 163-cysteine 169. 2 SUEL-type lectin domains span residues 18-100 and 107-196; these read LSCD…YNCF and TCEH…YVCQ. A glycan (N-linked (GlcNAc...) asparagine) is linked at asparagine 168.

As to quaternary structure, homodimer; non-covalently linked.

Its function is as follows. Rhamnose-binding lectin. Also binds melibiose, raffinose, D-galactose, L-arabinose, D-fucose, maltose and D-glucose with decreasing affinity. Does not bind D-arabinose, L-fucose, lactose, xylose or 2-deoxy-D-galactose. Shows strong hemagglutinating activity against rabbit erythrocytes. In Scomberomorus niphonius (Japanese Spanish mackerel), this protein is L-rhamnose-binding lectin SML.